The chain runs to 330 residues: ADP-L-glycero-D-manno-heptose-6-epimerase (330 aa).

NADP(+) is bound by residues 11–12, 32–33, Gln39, Gln54, 75–79, and Asn92; these read FI, DD, and QGACA. The active-site Proton acceptor is the Tyr139. An NADP(+)-binding site is contributed by Lys143. Residue Asn168 coordinates substrate. Positions 169 and 177 each coordinate NADP(+). The Proton acceptor role is filled by Lys177. Substrate contacts are provided by residues Arg179, His186, 200-203, Arg213, and Tyr292; that span reads FGEH.

It belongs to the NAD(P)-dependent epimerase/dehydratase family. HldD subfamily. Homopentamer. NADP(+) is required as a cofactor.

The enzyme catalyses ADP-D-glycero-beta-D-manno-heptose = ADP-L-glycero-beta-D-manno-heptose. It participates in nucleotide-sugar biosynthesis; ADP-L-glycero-beta-D-manno-heptose biosynthesis; ADP-L-glycero-beta-D-manno-heptose from D-glycero-beta-D-manno-heptose 7-phosphate: step 4/4. In terms of biological role, catalyzes the interconversion between ADP-D-glycero-beta-D-manno-heptose and ADP-L-glycero-beta-D-manno-heptose via an epimerization at carbon 6 of the heptose. This is ADP-L-glycero-D-manno-heptose-6-epimerase from Pseudomonas paraeruginosa (strain DSM 24068 / PA7) (Pseudomonas aeruginosa (strain PA7)).